The chain runs to 265 residues: 3-methyl-2-oxobutanoate hydroxymethyltransferase (265 aa).

The Mg(2+) site is built by D41 and D80. 3-methyl-2-oxobutanoate contacts are provided by residues 41 to 42 (DS), D80, and K109. E111 lines the Mg(2+) pocket. E178 acts as the Proton acceptor in catalysis.

This sequence belongs to the PanB family. Homodecamer; pentamer of dimers. Mg(2+) is required as a cofactor.

It localises to the cytoplasm. The enzyme catalyses 3-methyl-2-oxobutanoate + (6R)-5,10-methylene-5,6,7,8-tetrahydrofolate + H2O = 2-dehydropantoate + (6S)-5,6,7,8-tetrahydrofolate. Its pathway is cofactor biosynthesis; (R)-pantothenate biosynthesis; (R)-pantoate from 3-methyl-2-oxobutanoate: step 1/2. Its function is as follows. Catalyzes the reversible reaction in which hydroxymethyl group from 5,10-methylenetetrahydrofolate is transferred onto alpha-ketoisovalerate to form ketopantoate. The chain is 3-methyl-2-oxobutanoate hydroxymethyltransferase from Thermosipho africanus (strain TCF52B).